A 197-amino-acid polypeptide reads, in one-letter code: MYB-like transcription factor EOBII (197 aa).

2 HTH myb-type domains span residues 10-62 (DAEV…LNYL) and 63-117 (RPDV…QKHI). 2 consecutive DNA-binding regions (H-T-H motif) follow at residues 38–62 (WNSL…LNYL) and 90–113 (WSKI…RTRI). Positions 125–158 (GQAASSEQNDHQEACTSQMSNGPNDNTIDQTYSP) are disordered. Polar residues predominate over residues 138 to 158 (ACTSQMSNGPNDNTIDQTYSP).

As to expression, specifically expressed in flowers, mostly in stigmas, petal tubes and petal limbs, and, to a lower extent, in anthers and stamen. Also present at low levels in roots, stems, leaves and sepals.

The protein localises to the nucleus. Its function is as follows. MYB-type transcription factor controlling the production of volatile organic compounds (VOCs), including floral volatile benzenoids and phenylpropanoids (FVBP), in flowers of fragrant cultivars (e.g. cv. Mitchell and cv. V26) by regulating the expression of ODO1 and EOBI, key regulators of the shikimate pathway, and of several biosynthetic floral scent-related genes including IGS, PAL2 and CFAT. This scent, mostly produced in the evening and night by the petals, attracts the pollinators (e.g. the night-active hawkmoth pollinator Manduca sexta). Binds to and activates the ODO1 and EOBI promoters via MYB binding sites (MBS) 5'-AAACCTAAT-3' and 5'-CTAACT-3'. Regulates the promoters of IGS1, CFAT and PAL2. Controls flowers petal opening by modulating a global transcriptomic switch. This Petunia hybrida (Petunia) protein is MYB-like transcription factor EOBII.